The chain runs to 295 residues: Tyrosine recombinase XerC (295 aa).

A Core-binding (CB) domain is found at 1 to 84; the sequence is MTLEEQFLSY…SLKSFYRFLT (84 aa). Residues 105–289 enclose the Tyr recombinase domain; the sequence is KLPEFFYQDE…SMQHLTVEYR (185 aa). Residues Arg145, Lys169, His241, Arg244, and His267 contribute to the active site. Tyr276 serves as the catalytic O-(3'-phospho-DNA)-tyrosine intermediate.

Belongs to the 'phage' integrase family. XerC subfamily. In terms of assembly, forms a cyclic heterotetrameric complex composed of two molecules of XerC and two molecules of XerD.

It localises to the cytoplasm. Functionally, site-specific tyrosine recombinase, which acts by catalyzing the cutting and rejoining of the recombining DNA molecules. The XerC-XerD complex is essential to convert dimers of the bacterial chromosome into monomers to permit their segregation at cell division. It also contributes to the segregational stability of plasmids. In Lactobacillus delbrueckii subsp. bulgaricus (strain ATCC 11842 / DSM 20081 / BCRC 10696 / JCM 1002 / NBRC 13953 / NCIMB 11778 / NCTC 12712 / WDCM 00102 / Lb 14), this protein is Tyrosine recombinase XerC.